The following is a 122-amino-acid chain: MASPKIASLSWGQMKVQGSTLTYKDCKVWPGGSRAWDWRETGTEHSPGVQPADVKEVAEKGVQTLVIGRGMSEALKVPPSTVEYLEKQGIDVRVLQTEQAVKEYNALVAQGVRVGGVFHSTC.

The MTH138-like domain stretch occupies residues 6–122; it reads IASLSWGQMK…RVGGVFHSTC (117 aa).

Belongs to the AAMDC family. Widely expressed, with high expression in the adipose tissue and skeletal muscle (at protein level).

The protein resides in the cytoplasm. May play a role in preadipocyte differentiation and adipogenesis. The sequence is that of Mth938 domain-containing protein (Aamdc) from Mus musculus (Mouse).